Reading from the N-terminus, the 445-residue chain is Phosphoglucosamine mutase (445 aa).

The active-site Phosphoserine intermediate is the S102. 4 residues coordinate Mg(2+): S102, D241, D243, and D245. S102 is modified (phosphoserine).

Belongs to the phosphohexose mutase family. The cofactor is Mg(2+). In terms of processing, activated by phosphorylation.

It catalyses the reaction alpha-D-glucosamine 1-phosphate = D-glucosamine 6-phosphate. In terms of biological role, catalyzes the conversion of glucosamine-6-phosphate to glucosamine-1-phosphate. This is Phosphoglucosamine mutase from Shewanella halifaxensis (strain HAW-EB4).